The sequence spans 646 residues: Phosphomethylpyrimidine synthase (646 aa).

Residues asparagine 235, methionine 264, tyrosine 293, histidine 329, 349 to 351, 390 to 393, and glutamate 429 contribute to the substrate site; these read SRG and DGLR. Histidine 433 contributes to the Zn(2+) binding site. Tyrosine 456 contacts substrate. Residue histidine 497 coordinates Zn(2+). Residues cysteine 577, cysteine 580, and cysteine 585 each coordinate [4Fe-4S] cluster.

The protein belongs to the ThiC family. As to quaternary structure, homodimer. The cofactor is [4Fe-4S] cluster.

The catalysed reaction is 5-amino-1-(5-phospho-beta-D-ribosyl)imidazole + S-adenosyl-L-methionine = 4-amino-2-methyl-5-(phosphooxymethyl)pyrimidine + CO + 5'-deoxyadenosine + formate + L-methionine + 3 H(+). The protein operates within cofactor biosynthesis; thiamine diphosphate biosynthesis. In terms of biological role, catalyzes the synthesis of the hydroxymethylpyrimidine phosphate (HMP-P) moiety of thiamine from aminoimidazole ribotide (AIR) in a radical S-adenosyl-L-methionine (SAM)-dependent reaction. In Vibrio campbellii (strain ATCC BAA-1116), this protein is Phosphomethylpyrimidine synthase.